Here is a 373-residue protein sequence, read N- to C-terminus: Outer membrane protein C (373 aa).

Residues 1–21 (MKVKVLSLLVPALLVAGAANA) form the signal peptide. The next 5 beta stranded transmembrane spans lie at 34–42 (LYGKVDGLH), 54–63 (QTYMRLGFKG), 74–84 (YGQWEYQIQGN), 92–101 (SWTRVAFAGL), and 107–115 (GSFDYGRNY). The interval 116–133 (GVVYDVTSWTDVLPEFGG) is loop L3; may constrict the pore. Transmembrane regions (beta stranded) follow at residues 142–154 (MQQR…TYRS), 164–171 (LNFAVQYQ), 197–203 (VGGSITY), 208–215 (FGIGAAVS), 244–250 (YTGGLKY), 255–262 (IYLAAQYT), 272–288 (NLGW…VAQY), 294–301 (LRPSLAYL), 325–332 (VDVGATYY), 337–344 (MSTYVDYK), and 365–372 (VALGLVYQ).

Belongs to the Gram-negative porin family. Homotrimer. Forms mixed heterotrimers with OmpF and with PhoE; other mixed heterotrimers are also probable. In terms of assembly, (Microbial infection) Upon infection with phage Sf6 associates with the mature bacteriophage capsid. Was originally suggested to be within the bacteriophage capsid. This has been disproven.

The protein resides in the cell outer membrane. It localises to the extracellular vesicle. In terms of biological role, forms pores that allow passive diffusion of small molecules across the outer membrane. Its function is as follows. (Microbial infection) Serves as a less-preferential secondary receptor during phage Sf6 infection; infection requires both lipopolysaccharide (LPS) and (in the absence of OmpA) OmpC can serve as the secondary receptor. The polypeptide is Outer membrane protein C (ompC) (Shigella flexneri).